The sequence spans 373 residues: 2-aminoethylphosphonate--pyruvate transaminase (373 aa).

K191 is subject to N6-(pyridoxal phosphate)lysine.

This sequence belongs to the class-V pyridoxal-phosphate-dependent aminotransferase family. PhnW subfamily. As to quaternary structure, homodimer. It depends on pyridoxal 5'-phosphate as a cofactor.

It carries out the reaction (2-aminoethyl)phosphonate + pyruvate = phosphonoacetaldehyde + L-alanine. In terms of biological role, involved in phosphonate degradation. The chain is 2-aminoethylphosphonate--pyruvate transaminase from Burkholderia ambifaria (strain MC40-6).